A 146-amino-acid chain; its full sequence is Cytochrome c' (146 aa).

The N-terminal stretch at 1 to 21 is a signal peptide; the sequence is MKLRIATIAGLVVLGSGFAVA. Residues arginine 29, threonine 86, alanine 87, cysteine 134, cysteine 137, and histidine 138 each contribute to the heme c site.

Monomer. In terms of processing, binds 1 heme c group covalently per subunit.

Functionally, cytochrome c' is the most widely occurring bacterial c-type cytochrome. Cytochromes c' are high-spin proteins and the heme has no sixth ligand. Their exact function is not known. The protein is Cytochrome c' (cycA) of Rhodopseudomonas palustris (strain ATCC BAA-98 / CGA009).